The chain runs to 236 residues: Large ribosomal subunit protein uL1 (236 aa).

The protein belongs to the universal ribosomal protein uL1 family. Part of the 50S ribosomal subunit.

Functionally, binds directly to 23S rRNA. The L1 stalk is quite mobile in the ribosome, and is involved in E site tRNA release. Protein L1 is also a translational repressor protein, it controls the translation of the L11 operon by binding to its mRNA. In Sorangium cellulosum (strain So ce56) (Polyangium cellulosum (strain So ce56)), this protein is Large ribosomal subunit protein uL1.